The primary structure comprises 357 residues: Probable protein phosphatase 2C 60 (357 aa).

The PPM-type phosphatase domain maps to 23-329 (RYGLSSMQGW…DNMTMILVRF (307 aa)). Mn(2+) is bound by residues D57, G58, D272, and D320. Positions 331-357 (NPTPSETELKPEASQAEGNHDEPSSSN) are disordered. Residues 348-357 (GNHDEPSSSN) are compositionally biased toward basic and acidic residues.

Belongs to the PP2C family. Mg(2+) is required as a cofactor. Mn(2+) serves as cofactor.

It catalyses the reaction O-phospho-L-seryl-[protein] + H2O = L-seryl-[protein] + phosphate. The enzyme catalyses O-phospho-L-threonyl-[protein] + H2O = L-threonyl-[protein] + phosphate. This Arabidopsis thaliana (Mouse-ear cress) protein is Probable protein phosphatase 2C 60.